The primary structure comprises 301 residues: GTP cyclohydrolase FolE2 (301 aa).

Belongs to the GTP cyclohydrolase IV family.

It catalyses the reaction GTP + H2O = 7,8-dihydroneopterin 3'-triphosphate + formate + H(+). The protein operates within cofactor biosynthesis; 7,8-dihydroneopterin triphosphate biosynthesis; 7,8-dihydroneopterin triphosphate from GTP: step 1/1. Its function is as follows. Converts GTP to 7,8-dihydroneopterin triphosphate. This is GTP cyclohydrolase FolE2 from Pseudomonas savastanoi pv. phaseolicola (strain 1448A / Race 6) (Pseudomonas syringae pv. phaseolicola (strain 1448A / Race 6)).